A 256-amino-acid polypeptide reads, in one-letter code: MRHSPRKRFGQNFLQDKYIINEILRAINPLADDNMLEIGPGLGALTQPLLQKLNRLTAIEIDTDLQNYLTRLPVSQGKLNLIPADALTVDFCQFGPHLRVVGNLPYNISTPLLIYLLKFITCIDDMHFMLQKEVVERIAATHGTKAYGRLSVMLQYHCEVEYLFDVPPEAFEPKPKVDSAIVRLTPYRVSPFESVNTEKLENIVAKAFAMRRKTLTNNLKGIISLSQLNDLGIDGGKRPEQISVAEYVQLAKFISN.

Positions 12, 14, 39, 60, 85, and 103 each coordinate S-adenosyl-L-methionine.

The protein belongs to the class I-like SAM-binding methyltransferase superfamily. rRNA adenine N(6)-methyltransferase family. RsmA subfamily.

It is found in the cytoplasm. It catalyses the reaction adenosine(1518)/adenosine(1519) in 16S rRNA + 4 S-adenosyl-L-methionine = N(6)-dimethyladenosine(1518)/N(6)-dimethyladenosine(1519) in 16S rRNA + 4 S-adenosyl-L-homocysteine + 4 H(+). Functionally, specifically dimethylates two adjacent adenosines (A1518 and A1519) in the loop of a conserved hairpin near the 3'-end of 16S rRNA in the 30S particle. May play a critical role in biogenesis of 30S subunits. The chain is Ribosomal RNA small subunit methyltransferase A from Legionella pneumophila (strain Corby).